The primary structure comprises 253 residues: 5'-nucleotidase SurE (253 aa).

Asp-8, Asp-9, Ser-39, and Asn-92 together coordinate a divalent metal cation.

The protein belongs to the SurE nucleotidase family. The cofactor is a divalent metal cation.

The protein resides in the cytoplasm. It carries out the reaction a ribonucleoside 5'-phosphate + H2O = a ribonucleoside + phosphate. Nucleotidase that shows phosphatase activity on nucleoside 5'-monophosphates. This chain is 5'-nucleotidase SurE, found in Burkholderia pseudomallei (strain 668).